The following is a 202-amino-acid chain: Large ribosomal subunit protein bL25 (202 aa).

Belongs to the bacterial ribosomal protein bL25 family. CTC subfamily. As to quaternary structure, part of the 50S ribosomal subunit; part of the 5S rRNA/L5/L18/L25 subcomplex. Contacts the 5S rRNA. Binds to the 5S rRNA independently of L5 and L18.

In terms of biological role, this is one of the proteins that binds to the 5S RNA in the ribosome where it forms part of the central protuberance. The protein is Large ribosomal subunit protein bL25 of Methylococcus capsulatus (strain ATCC 33009 / NCIMB 11132 / Bath).